Reading from the N-terminus, the 513-residue chain is Serine/threonine protein phosphatase 2A 55 kDa regulatory subunit B alpha isoform (513 aa).

Methionine 1 is subject to N-acetylmethionine. WD repeat units lie at residues 36–75 (QEVD…NSSG), 112–153 (EIEE…IKKI), 232–270 (AHDY…QSFN), 281–321 (DLSE…LCDS), 340–378 (EIIA…GPVA), and 483–513 (DYTT…MYYA).

It belongs to the phosphatase 2A regulatory subunit B family. As to quaternary structure, PP2A consists of a common heteromeric enzyme, composed of a catalytic subunit (subunits C), a constant regulatory subunit (subunit A), and a variety of regulatory subunits such as subunits B (the R2/B/PR55/B55, R3/B''/PR72/PR130/PR59 and R5/B'/B56 families). Interacts with SIC/RON3. Expressed ubiquitously.

Functionally, the B regulatory subunit may modulate substrate selectivity and catalytic activity, and may also direct the localization of the catalytic enzyme to a particular subcellular compartment. This chain is Serine/threonine protein phosphatase 2A 55 kDa regulatory subunit B alpha isoform (PP2AB1), found in Arabidopsis thaliana (Mouse-ear cress).